The chain runs to 453 residues: Ribulose bisphosphate carboxylase large chain (453 aa).

Positions 1 to 2 (MS) are excised as a propeptide. P3 carries the N-acetylproline modification. The residue at position 14 (K14) is an N6,N6,N6-trimethyllysine. Substrate is bound by residues N123 and T173. K175 (proton acceptor) is an active-site residue. Residue K177 participates in substrate binding. The Mg(2+) site is built by K201, D203, and E204. N6-carboxylysine is present on K201. H294 acts as the Proton acceptor in catalysis. The substrate site is built by R295, H327, and S379.

It belongs to the RuBisCO large chain family. Type I subfamily. In terms of assembly, heterohexadecamer of 8 large chains and 8 small chains; disulfide-linked. The disulfide link is formed within the large subunit homodimers. Mg(2+) is required as a cofactor. The disulfide bond which can form in the large chain dimeric partners within the hexadecamer appears to be associated with oxidative stress and protein turnover.

It is found in the plastid. Its subcellular location is the chloroplast. The catalysed reaction is 2 (2R)-3-phosphoglycerate + 2 H(+) = D-ribulose 1,5-bisphosphate + CO2 + H2O. It catalyses the reaction D-ribulose 1,5-bisphosphate + O2 = 2-phosphoglycolate + (2R)-3-phosphoglycerate + 2 H(+). Functionally, ruBisCO catalyzes two reactions: the carboxylation of D-ribulose 1,5-bisphosphate, the primary event in carbon dioxide fixation, as well as the oxidative fragmentation of the pentose substrate in the photorespiration process. Both reactions occur simultaneously and in competition at the same active site. The sequence is that of Ribulose bisphosphate carboxylase large chain from Sherardia arvensis (Blue field-madder).